Here is a 245-residue protein sequence, read N- to C-terminus: Large ribosomal subunit protein eL29 (245 aa).

Residues 1–26 show a composition bias toward basic residues; it reads MAKSKNHTTHNQSRKWHRNGIKKPRS. 2 disordered regions span residues 1 to 33 and 114 to 245; these read MAKS…ESLK and RGLR…AKAP. An N6-methyllysine modification is found at Lys5. Ser31 is subject to Phosphoserine. Lys33 carries the N6-acetyllysine modification. The segment covering 134 to 150 has biased composition (low complexity); it reads KGKVKAQIKAQAQAQIK. The span at 157–171 shows a compositional bias: basic and acidic residues; that stretch reads AQAETKPKAQAETKP. Low complexity-rich tracts occupy residues 172–226 and 234–245; these read KAQA…ATPA and PPKGAQPPAKAP.

It belongs to the eukaryotic ribosomal protein eL29 family. As to quaternary structure, component of the large ribosomal subunit.

Its subcellular location is the cytoplasm. Functionally, component of the large ribosomal subunit. The ribosome is a large ribonucleoprotein complex responsible for the synthesis of proteins in the cell. This is Large ribosomal subunit protein eL29 (RPL29) from Oryctolagus cuniculus (Rabbit).